We begin with the raw amino-acid sequence, 106 residues long: ATP-dependent Clp protease adapter protein ClpS (106 aa).

It belongs to the ClpS family. In terms of assembly, binds to the N-terminal domain of the chaperone ClpA.

Functionally, involved in the modulation of the specificity of the ClpAP-mediated ATP-dependent protein degradation. The sequence is that of ATP-dependent Clp protease adapter protein ClpS from Photobacterium profundum (strain SS9).